The primary structure comprises 1229 residues: Pesticidal crystal protein Cry1Bb (1229 aa).

The protein belongs to the delta endotoxin family.

Promotes colloidosmotic lysis by binding to the midgut epithelial cells of many lepidopteran larvae. This is Pesticidal crystal protein Cry1Bb (cry1Bb) from Bacillus thuringiensis.